The chain runs to 201 residues: Small ribosomal subunit protein uS4c (201 aa).

A disordered region spans residues 20–44 (GLTSKRPRAGSDLRNQSRSGKKSQY). The S4 RNA-binding domain occupies 89-152 (MRLDNILFRL…NSRTLVQNLL (64 aa)).

This sequence belongs to the universal ribosomal protein uS4 family. As to quaternary structure, part of the 30S ribosomal subunit. Contacts protein S5. The interaction surface between S4 and S5 is involved in control of translational fidelity.

The protein resides in the plastid. It localises to the chloroplast. Its function is as follows. One of the primary rRNA binding proteins, it binds directly to 16S rRNA where it nucleates assembly of the body of the 30S subunit. Functionally, with S5 and S12 plays an important role in translational accuracy. The sequence is that of Small ribosomal subunit protein uS4c (rps4) from Aethionema cordifolium (Lebanon stonecress).